A 104-amino-acid polypeptide reads, in one-letter code: Large ribosomal subunit protein uL24 (104 aa).

The protein belongs to the universal ribosomal protein uL24 family. Part of the 50S ribosomal subunit.

In terms of biological role, one of two assembly initiator proteins, it binds directly to the 5'-end of the 23S rRNA, where it nucleates assembly of the 50S subunit. Its function is as follows. One of the proteins that surrounds the polypeptide exit tunnel on the outside of the subunit. In Pseudomonas entomophila (strain L48), this protein is Large ribosomal subunit protein uL24.